Here is a 160-residue protein sequence, read N- to C-terminus: Early E3 18.5 kDa glycoprotein (160 aa).

The signal sequence occupies residues 1–17 (MIRYIILGLLTLASAHG). Residues 18–124 (TTQKVDFKEP…PPQNCVENTG (107 aa)) lie on the Lumenal side of the membrane. 2 disulfide bridges follow: C29–C46 and C40–C101. N-linked (GlcNAc...) asparagine; by host glycans are attached at residues N30 and N79. A helical membrane pass occupies residues 125–145 (TFCCTAMLITVLALVCTLLYI). Topologically, residues 146–160 (KYKSRRSFIEEKKMP) are cytoplasmic. The Di-lysine motif motif lies at 157–160 (KKMP).

The protein belongs to the adenoviridae E19 family. Post-translationally, both disulfide bonds are absolutely critical for the interaction with MHC antigens. N-glycosylated; high-mannose.

Its subcellular location is the host endoplasmic reticulum membrane. Its function is as follows. Binds and retains class I heavy chains in the endoplasmic reticulum during the early period of virus infection, thereby impairing their transport to the cell surface. Also delays the expression of class I alleles that it cannot affect by direct retention. Binds transporters associated with antigen processing (TAP) and acts as a tapasin inhibitor, preventing class I/TAP association. In consequence, infected cells are masked for immune recognition by cytotoxic T-lymphocytes. The sequence is that of Early E3 18.5 kDa glycoprotein from Homo sapiens (Human).